The sequence spans 457 residues: Chromosomal replication initiator protein DnaA (457 aa).

The interval 1-90 (MAVSLWQQCI…RPSAKPQAPA (90 aa)) is domain I, interacts with DnaA modulators. A disordered region spans residues 79–120 (GSRPSAKPQAPAPAAVKAAAPQPKPGNSFVSQPEPAVSNHRS). A compositionally biased stretch (low complexity) spans 84-99 (AKPQAPAPAAVKAAAP). The segment at 91–120 (PAAVKAAAPQPKPGNSFVSQPEPAVSNHRS) is domain II. Residues 121–337 (NINPTYQFDN…GALNRVIANA (217 aa)) form a domain III, AAA+ region region. Residues glycine 165, glycine 167, lysine 168, and threonine 169 each coordinate ATP. The interval 338-457 (NFTGRPITID…YANLIRTLSS (120 aa)) is domain IV, binds dsDNA.

It belongs to the DnaA family. As to quaternary structure, oligomerizes as a right-handed, spiral filament on DNA at oriC.

It is found in the cytoplasm. In terms of biological role, plays an essential role in the initiation and regulation of chromosomal replication. ATP-DnaA binds to the origin of replication (oriC) to initiate formation of the DNA replication initiation complex once per cell cycle. Binds the DnaA box (a 9 base pair repeat at the origin) and separates the double-stranded (ds)DNA. Forms a right-handed helical filament on oriC DNA; dsDNA binds to the exterior of the filament while single-stranded (ss)DNA is stabiized in the filament's interior. The ATP-DnaA-oriC complex binds and stabilizes one strand of the AT-rich DNA unwinding element (DUE), permitting loading of DNA polymerase. After initiation quickly degrades to an ADP-DnaA complex that is not apt for DNA replication. Binds acidic phospholipids. This is Chromosomal replication initiator protein DnaA from Shewanella amazonensis (strain ATCC BAA-1098 / SB2B).